We begin with the raw amino-acid sequence, 256 residues long: Ribosomal RNA small subunit methyltransferase A (256 aa).

6 residues coordinate S-adenosyl-L-methionine: His12, Leu14, Gly39, Glu60, Asp81, and Asn103.

The protein belongs to the class I-like SAM-binding methyltransferase superfamily. rRNA adenine N(6)-methyltransferase family. RsmA subfamily.

The protein localises to the cytoplasm. It catalyses the reaction adenosine(1518)/adenosine(1519) in 16S rRNA + 4 S-adenosyl-L-methionine = N(6)-dimethyladenosine(1518)/N(6)-dimethyladenosine(1519) in 16S rRNA + 4 S-adenosyl-L-homocysteine + 4 H(+). Functionally, specifically dimethylates two adjacent adenosines (A1518 and A1519) in the loop of a conserved hairpin near the 3'-end of 16S rRNA in the 30S particle. May play a critical role in biogenesis of 30S subunits. In Methylibium petroleiphilum (strain ATCC BAA-1232 / LMG 22953 / PM1), this protein is Ribosomal RNA small subunit methyltransferase A.